Reading from the N-terminus, the 201-residue chain is Adenylyl-sulfate kinase (201 aa).

The interval 1 to 23 (MALHDENVVWHSHPVTPQQREQH) is disordered. 35-42 (GLSGSGKS) lines the ATP pocket. Ser109 functions as the Phosphoserine intermediate in the catalytic mechanism.

Belongs to the APS kinase family.

The enzyme catalyses adenosine 5'-phosphosulfate + ATP = 3'-phosphoadenylyl sulfate + ADP + H(+). Its pathway is sulfur metabolism; hydrogen sulfide biosynthesis; sulfite from sulfate: step 2/3. Catalyzes the synthesis of activated sulfate. The polypeptide is Adenylyl-sulfate kinase (Escherichia coli O127:H6 (strain E2348/69 / EPEC)).